A 761-amino-acid polypeptide reads, in one-letter code: MESPQLCLVLLVLGFSSGGVSATPVLEARPQVSCSLEGVEIKGGSFQLLQGGQALEYLCPSGFYPYPVQTRTCRSTGSWSDLQTRDQKIVQKAECRAIRCPRPQDFENGEFWPRSPFYNLSDQISFQCYDGYVLRGSANRTCQENGRWDGQTAICDDGAGYCPNPGIPIGTRKVGSQYRLEDIVTYHCSRGLVLRGSQKRKCQEGGSWSGTEPSCQDSFMYDSPQEVAEAFLSSLTETIEGADAEDGHSPGEQQKRKIVLDPSGSMNIYLVLDGSDSIGSSNFTGAKRCLTNLIEKVASYGVRPRYGLLTYATVPKVLVRVSDERSSDADWVTEKLNQISYEDHKLKSGTNTKRALQAVYSMMSWAGDAPPEGWNRTRHVIIIMTDGLHNMGGNPVTVIQDIRALLDIGRDPKNPREDYLDVYVFGVGPLVDSVNINALASKKDNEHHVFKVKDMEDLENVFYQMIDETKSLSLCGMVWEHKKGNDYHKQPWQAKISVTRPLKGHETCMGAVVSEYFVLTAAHCFMVDDQKHSIKVSVGGQRRDLEIEEVLFHPKYNINGKKAEGIPEFYDYDVALVKLKNKLKYGQTLRPICLPCTEGTTRALRLPQTATCKQHKEQLLPVKDVKALFVSEQGKSLTRKEVYIKNGDKKASCERDATKAQGYEKVKDASEVVTPRFLCTGGVDPYADPNTCKGDSGGPLIVHKRSRFIQVGVISWGVVDVCRDQRRQQLVPSYARDFHINLFQVLPWLKDKLKDEDLGFL.

A signal peptide spans 1-22; the sequence is MESPQLCLVLLVLGFSSGGVSA. 3 Sushi domains span residues 32-97, 98-157, and 160-217; these read VSCS…ECRA, IRCP…ICDD, and GYCP…SCQD. 6 disulfide bridges follow: Cys-34–Cys-73, Cys-59–Cys-95, Cys-100–Cys-142, Cys-128–Cys-155, Cys-162–Cys-202, and Cys-188–Cys-215. Asn-119 and Asn-139 each carry an N-linked (GlcNAc...) asparagine glycan. One can recognise a VWFA domain in the interval 267-466; the sequence is NIYLVLDGSD…DLENVFYQMI (200 aa). Mg(2+)-binding residues include Ser-275 and Ser-277. The N-linked (GlcNAc...) asparagine glycan is linked to Asn-282. Thr-350 is a Mg(2+) binding site. N-linked (GlcNAc...) asparagine glycosylation occurs at Asn-375. The 281-residue stretch at 474–754 folds into the Peptidase S1 domain; it reads LCGMVWEHKK…VLPWLKDKLK (281 aa). Intrachain disulfides connect Cys-475–Cys-593, Cys-508–Cys-524, Cys-596–Cys-612, Cys-653–Cys-679, and Cys-692–Cys-722. Catalysis depends on charge relay system residues His-523 and Asp-573. Ser-696 serves as the catalytic Charge relay system.

This sequence belongs to the peptidase S1 family. As to quaternary structure, monomer. Interacts with complement C3b; this interaction is dependent on the presence of Mg(2+). Catalytic component of the C3 convertase of the alternative complement pathway, also named C3bBb, composed of complement factor B Bb and complement C3b. Catalytic component of the C5 convertase of the alternative complement pathway, also named C3bBb3b, composed of complement factor B Bb and additional molecules of complement C3b. Interacts to CFP; this interaction contributes to the stabilization of the active C3-convertase enzyme complex. Requires Mg(2+) as cofactor. Mn(2+) is required as a cofactor. Post-translationally, cleaved by CFD following activation of the alternative complement system, generating Ba and Bb chains. Cleavage and activation takes place when CFB is already associated with complement C3b.

The protein localises to the secreted. It localises to the cell surface. It catalyses the reaction Cleavage of Arg-|-Ser bond in complement component C3 alpha-chain to yield C3a and C3b, and Arg-|-Xaa bond in complement component C5 alpha-chain to yield C5a and C5b.. Its function is as follows. Precursor of the catalytic component of the C3 and C5 convertase complexes of the alternative pathway of the complement system, a cascade of proteins that leads to phagocytosis and breakdown of pathogens and signaling that strengthens the adaptive immune system. The alternative complement pathway acts as an amplification loop that enhances other complement pathways (classical, lectin and GZMK) by promoting formation of additional C3 and C5 convertases. CFB is cleaved and activated by CFD to generate Ba and Bb chains; Bb chain constituting the catalytic component of the C3 and C5 convertases. Functionally, serine protease component of the complement C3 and C5 convertase complexes of the alternative complement pathway. Following cleavage and activation by factor D (CFD), forms the C3 convertase together with complement C3b. As part of the C3 convertase, cleaves and activates C3 into C3a anaphylatoxin and C3b opsonin, the next components of the complement pathways. When an additional complement C3b molecule binds to the C3 convertase, forms the C5 convertase, which cleaves and activates C5 into C5a anaphylatoxin and C5b component of the membrane attack complex. Involved in proliferation and differentiation of preactivated B-lymphocytes, rapid spreading of peripheral blood monocytes, stimulation of lymphocyte blastogenesis and lysis of erythrocytes. The sequence is that of Complement factor B (Cfb) from Mus musculus (Mouse).